Here is a 649-residue protein sequence, read N- to C-terminus: Ubiquitin-associated and SH3 domain-containing protein B (649 aa).

Ser-20 carries the phosphoserine modification. Residue Thr-23 is modified to Phosphothreonine. The UBA domain maps to 27-76; it reads NRQQRPGTIKHGSALDVLLSMGFPRARAQKALASTGGRSVQAACDWLFSH. An SH3 domain is found at 254 to 319; the sequence is ANHETLQVIY…PENYITKADE (66 aa). The protein tyrosine phosphatase stretch occupies residues 380–649; sequence GPQKRCLFVC…FNWRETLLQE (270 aa). Arg-390 is an active-site residue. The Tele-phosphohistidine intermediate role is filled by His-391. His-576 is a catalytic residue.

In terms of assembly, homodimer. Interacts with JAK2 (in vitro). Interacts with CBL. Part of a complex containing CBL and activated EGFR. Interacts with ubiquitin and with mono-ubiquitinated proteins. Interacts with ZAP70 (ubiquitinated form).

It is found in the cytoplasm. The protein localises to the nucleus. The catalysed reaction is O-phospho-L-tyrosyl-[protein] + H2O = L-tyrosyl-[protein] + phosphate. Functionally, interferes with CBL-mediated down-regulation and degradation of receptor-type tyrosine kinases. Promotes accumulation of activated target receptors, such as T-cell receptors and EGFR, on the cell surface. Exhibits tyrosine phosphatase activity toward several substrates including EGFR, FAK, SYK, and ZAP70. Down-regulates proteins that are dually modified by both protein tyrosine phosphorylation and ubiquitination. The chain is Ubiquitin-associated and SH3 domain-containing protein B (UBASH3B) from Homo sapiens (Human).